Here is a 106-residue protein sequence, read N- to C-terminus: Iron-sulfur cluster assembly protein CyaY (106 aa).

The protein belongs to the frataxin family.

In terms of biological role, involved in iron-sulfur (Fe-S) cluster assembly. May act as a regulator of Fe-S biogenesis. The sequence is that of Iron-sulfur cluster assembly protein CyaY from Shigella flexneri serotype 5b (strain 8401).